The primary structure comprises 117 residues: Large ribosomal subunit protein uL18 (117 aa).

It belongs to the universal ribosomal protein uL18 family. As to quaternary structure, part of the 50S ribosomal subunit; part of the 5S rRNA/L5/L18/L25 subcomplex. Contacts the 5S and 23S rRNAs.

Functionally, this is one of the proteins that bind and probably mediate the attachment of the 5S RNA into the large ribosomal subunit, where it forms part of the central protuberance. The sequence is that of Large ribosomal subunit protein uL18 from Onion yellows phytoplasma (strain OY-M).